The following is a 64-amino-acid chain: Large ribosomal subunit protein bL35 (64 aa).

A disordered region spans residues 1-21; sequence MPKMKTNRGAAKRFKVKKSGK. Basic residues predominate over residues 10 to 21; sequence AAKRFKVKKSGK.

Belongs to the bacterial ribosomal protein bL35 family.

The chain is Large ribosomal subunit protein bL35 from Nautilia profundicola (strain ATCC BAA-1463 / DSM 18972 / AmH).